We begin with the raw amino-acid sequence, 388 residues long: UDP-N-acetylglucosamine--N-acetylmuramyl-(pentapeptide) pyrophosphoryl-undecaprenol N-acetylglucosamine transferase (388 aa).

UDP-N-acetyl-alpha-D-glucosamine is bound by residues 15 to 17 (TGG), Asn125, Arg168, Ser196, and Gln297.

Belongs to the glycosyltransferase 28 family. MurG subfamily.

It is found in the cell inner membrane. The enzyme catalyses di-trans,octa-cis-undecaprenyl diphospho-N-acetyl-alpha-D-muramoyl-L-alanyl-D-glutamyl-meso-2,6-diaminopimeloyl-D-alanyl-D-alanine + UDP-N-acetyl-alpha-D-glucosamine = di-trans,octa-cis-undecaprenyl diphospho-[N-acetyl-alpha-D-glucosaminyl-(1-&gt;4)]-N-acetyl-alpha-D-muramoyl-L-alanyl-D-glutamyl-meso-2,6-diaminopimeloyl-D-alanyl-D-alanine + UDP + H(+). It functions in the pathway cell wall biogenesis; peptidoglycan biosynthesis. Cell wall formation. Catalyzes the transfer of a GlcNAc subunit on undecaprenyl-pyrophosphoryl-MurNAc-pentapeptide (lipid intermediate I) to form undecaprenyl-pyrophosphoryl-MurNAc-(pentapeptide)GlcNAc (lipid intermediate II). The polypeptide is UDP-N-acetylglucosamine--N-acetylmuramyl-(pentapeptide) pyrophosphoryl-undecaprenol N-acetylglucosamine transferase (Novosphingobium aromaticivorans (strain ATCC 700278 / DSM 12444 / CCUG 56034 / CIP 105152 / NBRC 16084 / F199)).